A 205-amino-acid chain; its full sequence is HTH-type transcriptional regulator PksA (205 aa).

Positions 8–68 (EKRRKQIAEA…FAMKLVQEKV (61 aa)) constitute an HTH tetR-type domain. The H-T-H motif DNA-binding region spans 31-50 (SARNIAKEAGLSLGALRHYF).

Transcriptional regulation of the polyketide synthase operon. The sequence is that of HTH-type transcriptional regulator PksA (pksA) from Bacillus subtilis (strain 168).